A 235-amino-acid polypeptide reads, in one-letter code: Probable queuosine precursor transporter (235 aa).

6 helical membrane passes run 17-37 (IIWLSFFHIFIIAASNYFVQI), 56-76 (FHSTWGTLTFPFIFLATDLTV), 87-107 (IIFVVMFPALIVSYVISVLFS), 127-147 (IAIASFAAYVVGQLLDVIVFN), 155-175 (WWVAPTSSMTFGSMADTFVFF), and 201-221 (FKLFIGIILFVPAYGVVLNVI).

Belongs to the vitamin uptake transporter (VUT/ECF) (TC 2.A.88) family. Q precursor transporter subfamily.

The protein resides in the cell inner membrane. Involved in the import of queuosine (Q) precursors, required for Q precursor salvage. The polypeptide is Probable queuosine precursor transporter (Haemophilus influenzae (strain ATCC 51907 / DSM 11121 / KW20 / Rd)).